Reading from the N-terminus, the 355-residue chain is Uroporphyrinogen decarboxylase (355 aa).

Substrate contacts are provided by residues 27-31, F46, D77, Y154, T209, and H328; that span reads RQAGR.

It belongs to the uroporphyrinogen decarboxylase family. As to quaternary structure, homodimer.

It is found in the cytoplasm. It catalyses the reaction uroporphyrinogen III + 4 H(+) = coproporphyrinogen III + 4 CO2. Its pathway is porphyrin-containing compound metabolism; protoporphyrin-IX biosynthesis; coproporphyrinogen-III from 5-aminolevulinate: step 4/4. Functionally, catalyzes the decarboxylation of four acetate groups of uroporphyrinogen-III to yield coproporphyrinogen-III. This is Uroporphyrinogen decarboxylase from Vibrio vulnificus (strain CMCP6).